The chain runs to 156 residues: ATP synthase subunit b 2 (156 aa).

A helical membrane pass occupies residues 11 to 31; the sequence is LLAFIFFVWFCMKFVWPPIMG.

The protein belongs to the ATPase B chain family. In terms of assembly, F-type ATPases have 2 components, F(1) - the catalytic core - and F(0) - the membrane proton channel. F(1) has five subunits: alpha(3), beta(3), gamma(1), delta(1), epsilon(1). F(0) has three main subunits: a(1), b(2) and c(10-14). The alpha and beta chains form an alternating ring which encloses part of the gamma chain. F(1) is attached to F(0) by a central stalk formed by the gamma and epsilon chains, while a peripheral stalk is formed by the delta and b chains.

The protein localises to the cell inner membrane. Functionally, f(1)F(0) ATP synthase produces ATP from ADP in the presence of a proton or sodium gradient. F-type ATPases consist of two structural domains, F(1) containing the extramembraneous catalytic core and F(0) containing the membrane proton channel, linked together by a central stalk and a peripheral stalk. During catalysis, ATP synthesis in the catalytic domain of F(1) is coupled via a rotary mechanism of the central stalk subunits to proton translocation. In terms of biological role, component of the F(0) channel, it forms part of the peripheral stalk, linking F(1) to F(0). This chain is ATP synthase subunit b 2, found in Pseudoalteromonas atlantica (strain T6c / ATCC BAA-1087).